The following is a 760-amino-acid chain: MRYNQFSYIPTSLERAAEELKELGFDLDLQKTAKANLESFLRKLFFHYPDSVYPLSHLIAKNDMDALSFFQSEQELSKEVFDLLALQVLGFIPGVDFTEADAFLDKLAFPIHFDETEIIKHIHHLLATRCKSGMTLIDDLVSQGMLTMDNDYHFFNGKSLATFDTSQLIREVVYVEAPLDTDQDGQLDLIKVNIIRPQSQKPLPTLMTPSPYHQGINEVANDKKLYRMEKELVVKKRRQITVEDRDFIPLETQPCKLPIGQNLESFSYINSYSLNDYFLARGFANIYVSGVGTAGSTGFMTSGDYAQIESFKAVIDWLNGRATAYTSHSKTHQVRADWANGLVCTTGKSYLGTMSTGLATTGVDGLAMIIAESAISSWYNYYRENGLVCSPGGYPGEDLDVLTELTYSRNLLAGDYLRHNDRYQELLNQQSQALDRQSGDYNQFWHDRNYLKNAHQIKCDVVYTHGLQDWNVKPRQVYEIVNALPSTINKHLFLHQGEHVYMHNWQSIDFRESMNALLCQKLLGLANDFSLPEMIWQDNTCPQNWQERKVFGTSTIKELDLGQELLLIDNHYGEDEFKAYGKDFRAFKAALFKGKANQALVDILLEEDLLINGEIVLQLKVKSSENKGLLSAQILDYGKKKRLGDLPIALTQSSIDNGQNFSREPLKELPFRENSYRVISKGFMNLQNRNNLSSIETIPNNKWMTVRLPLQPTIYHLEKGDTLRVILYTTDFEHTVRDNSNYALTIDLSQSQLIVPIASN.

Active-site charge relay system residues include S349, D469, and H499.

Belongs to the peptidase S15 family. Homodimer.

The protein resides in the cytoplasm. It catalyses the reaction Hydrolyzes Xaa-Pro-|- bonds to release unblocked, N-terminal dipeptides from substrates including Ala-Pro-|-p-nitroanilide and (sequentially) Tyr-Pro-|-Phe-Pro-|-Gly-Pro-|-Ile.. Removes N-terminal dipeptides sequentially from polypeptides having unsubstituted N-termini provided that the penultimate residue is proline. This chain is Xaa-Pro dipeptidyl-peptidase, found in Streptococcus pyogenes serotype M49 (strain NZ131).